We begin with the raw amino-acid sequence, 523 residues long: Light-independent protochlorophyllide reductase subunit B (523 aa).

Asp36 lines the [4Fe-4S] cluster pocket. The active-site Proton donor is Asp290. 425–426 (GL) is a binding site for substrate.

The protein belongs to the ChlB/BchB/BchZ family. Protochlorophyllide reductase is composed of three subunits; ChlL, ChlN and ChlB. Forms a heterotetramer of two ChlB and two ChlN subunits. It depends on [4Fe-4S] cluster as a cofactor.

It catalyses the reaction chlorophyllide a + oxidized 2[4Fe-4S]-[ferredoxin] + 2 ADP + 2 phosphate = protochlorophyllide a + reduced 2[4Fe-4S]-[ferredoxin] + 2 ATP + 2 H2O. The protein operates within porphyrin-containing compound metabolism; chlorophyll biosynthesis (light-independent). Its function is as follows. Component of the dark-operative protochlorophyllide reductase (DPOR) that uses Mg-ATP and reduced ferredoxin to reduce ring D of protochlorophyllide (Pchlide) to form chlorophyllide a (Chlide). This reaction is light-independent. The NB-protein (ChlN-ChlB) is the catalytic component of the complex. The sequence is that of Light-independent protochlorophyllide reductase subunit B from Prochlorococcus marinus (strain MIT 9301).